The sequence spans 473 residues: Cysteine--tRNA ligase (473 aa).

C28 is a Zn(2+) binding site. The 'HIGH' region signature appears at 30–40 (MTVYDYCHLGH). Residues C209, H234, and E238 each coordinate Zn(2+). A 'KMSKS' region motif is present at residues 282–286 (KMSKS). An ATP-binding site is contributed by K285.

The protein belongs to the class-I aminoacyl-tRNA synthetase family. As to quaternary structure, monomer. Requires Zn(2+) as cofactor.

Its subcellular location is the cytoplasm. The enzyme catalyses tRNA(Cys) + L-cysteine + ATP = L-cysteinyl-tRNA(Cys) + AMP + diphosphate. This is Cysteine--tRNA ligase from Neisseria gonorrhoeae (strain ATCC 700825 / FA 1090).